A 515-amino-acid chain; its full sequence is Probable cytosol aminopeptidase (515 aa).

Residues lysine 277 and aspartate 282 each contribute to the Mn(2+) site. Lysine 289 is a catalytic residue. Mn(2+) is bound by residues aspartate 300, aspartate 359, and glutamate 361. Residue arginine 363 is part of the active site.

This sequence belongs to the peptidase M17 family. Mn(2+) serves as cofactor.

It is found in the cytoplasm. It carries out the reaction Release of an N-terminal amino acid, Xaa-|-Yaa-, in which Xaa is preferably Leu, but may be other amino acids including Pro although not Arg or Lys, and Yaa may be Pro. Amino acid amides and methyl esters are also readily hydrolyzed, but rates on arylamides are exceedingly low.. The catalysed reaction is Release of an N-terminal amino acid, preferentially leucine, but not glutamic or aspartic acids.. In terms of biological role, presumably involved in the processing and regular turnover of intracellular proteins. Catalyzes the removal of unsubstituted N-terminal amino acids from various peptides. The polypeptide is Probable cytosol aminopeptidase (Streptomyces griseus subsp. griseus (strain JCM 4626 / CBS 651.72 / NBRC 13350 / KCC S-0626 / ISP 5235)).